Here is a 406-residue protein sequence, read N- to C-terminus: Succinylornithine transaminase (406 aa).

Lys-252 carries the N6-(pyridoxal phosphate)lysine modification.

It belongs to the class-III pyridoxal-phosphate-dependent aminotransferase family. AstC subfamily. Requires pyridoxal 5'-phosphate as cofactor.

The enzyme catalyses N(2)-succinyl-L-ornithine + 2-oxoglutarate = N-succinyl-L-glutamate 5-semialdehyde + L-glutamate. It functions in the pathway amino-acid degradation; L-arginine degradation via AST pathway; L-glutamate and succinate from L-arginine: step 3/5. Its function is as follows. Catalyzes the transamination of N(2)-succinylornithine and alpha-ketoglutarate into N(2)-succinylglutamate semialdehyde and glutamate. Can also act as an acetylornithine aminotransferase. The polypeptide is Succinylornithine transaminase (Escherichia coli O7:K1 (strain IAI39 / ExPEC)).